The chain runs to 373 residues: Putative glutamate--cysteine ligase 2-1 (373 aa).

It belongs to the glutamate--cysteine ligase type 2 family. YbdK subfamily.

The catalysed reaction is L-cysteine + L-glutamate + ATP = gamma-L-glutamyl-L-cysteine + ADP + phosphate + H(+). In terms of biological role, ATP-dependent carboxylate-amine ligase which exhibits weak glutamate--cysteine ligase activity. In Legionella pneumophila (strain Paris), this protein is Putative glutamate--cysteine ligase 2-1.